A 263-amino-acid polypeptide reads, in one-letter code: Eukaryotic translation initiation factor 3 subunit J-B (263 aa).

Over residues 1-13 (MAAAAAAAAAAAA) the composition is skewed to low complexity. The disordered stretch occupies residues 1–115 (MAAAAAAAAA…EPEESKVLTP (115 aa)). Position 2 is an N-acetylalanine (A2). Residues 6-74 (AAAAAAAAGD…KEEAEVKPEV (69 aa)) are sufficient for interaction with EIF3B. A phosphoserine mark is found at S16, S18, and S25. Residues 45–66 (EGEDEDEDVKDNWDDDDDENKE) are compositionally biased toward acidic residues. Residues 67–111 (EAEVKPEVKISEKKKIAEKIKEKERQQKKRQEEIKKRLEEPEESK) show a composition bias toward basic and acidic residues. The stretch at 75 to 140 (KISEKKKIAE…ESDLELAKET (66 aa)) forms a coiled coil. K111 participates in a covalent cross-link: Glycyl lysine isopeptide (Lys-Gly) (interchain with G-Cter in SUMO2). The residue at position 114 (T114) is a Phosphothreonine. S132 is modified (phosphoserine). The promotes stable association with the 40S ribosome stretch occupies residues 248-263 (YGGYEGGYVQDYEDFM). Y259 is modified (phosphotyrosine).

The protein belongs to the eIF-3 subunit J family. Component of the eukaryotic translation initiation factor 3 (eIF-3) complex, which is composed of 13 subunits: EIF3A, EIF3B, EIF3C, EIF3D, EIF3E, EIF3F, EIF3G, EIF3H, EIF3I, EIF3J, EIF3K, EIF3L and EIF3M. The eIF-3 complex appears to include 3 stable modules: module A is composed of EIF3A, EIF3B, EIF3G and EIF3I; module B is composed of EIF3F, EIF3H, and EIF3M; and module C is composed of EIF3C, EIF3D, EIF3E, EIF3K and EIF3L. EIF3C of module C binds EIF3B of module A and EIF3H of module B, thereby linking the three modules. EIF3J is a labile subunit that binds to the eIF-3 complex via EIF3B. The eIF-3 complex interacts with RPS6KB1 under conditions of nutrient depletion. Mitogenic stimulation leads to binding and activation of a complex composed of MTOR and RPTOR, leading to phosphorylation and release of RPS6KB1 and binding of EIF4B to eIF-3. Post-translationally, phosphorylated. Phosphorylation is enhanced upon serum stimulation.

It localises to the cytoplasm. In terms of biological role, component of the eukaryotic translation initiation factor 3 (eIF-3) complex, which is required for several steps in the initiation of protein synthesis. The eIF-3 complex associates with the 40S ribosome and facilitates the recruitment of eIF-1, eIF-1A, eIF-2:GTP:methionyl-tRNAi and eIF-5 to form the 43S pre-initiation complex (43S PIC). The eIF-3 complex stimulates mRNA recruitment to the 43S PIC and scanning of the mRNA for AUG recognition. The eIF-3 complex is also required for disassembly and recycling of post-termination ribosomal complexes and subsequently prevents premature joining of the 40S and 60S ribosomal subunits prior to initiation. The eIF-3 complex specifically targets and initiates translation of a subset of mRNAs involved in cell proliferation, including cell cycling, differentiation and apoptosis, and uses different modes of RNA stem-loop binding to exert either translational activation or repression. This subunit binds directly within the mRNA entry channel of the 40S ribosome to the aminoacyl (A) site. It may regulate the interaction between the 43S PIC and mRNA. This chain is Eukaryotic translation initiation factor 3 subunit J-B (Eif3j2), found in Mus musculus (Mouse).